Reading from the N-terminus, the 147-residue chain is UPF0306 protein YhbP (147 aa).

This sequence belongs to the UPF0306 family.

This chain is UPF0306 protein YhbP, found in Escherichia coli (strain SMS-3-5 / SECEC).